The chain runs to 364 residues: Homeobox protein Nkx-2.3 (364 aa).

The tract at residues 132-153 (GDCKAAEESERPKPRSRRKPRV) is disordered. The segment covering 135 to 144 (KAAEESERPK) has biased composition (basic and acidic residues). The segment at residues 148–207 (RRKPRVLFSQAQVFELERRFKQQRYLSAPEREHLASSLKLTSTQVKIWFQNRRYKCKRQR) is a DNA-binding region (homeobox).

It belongs to the NK-2 homeobox family.

It localises to the nucleus. Functionally, transcription factor. The chain is Homeobox protein Nkx-2.3 (NKX2-3) from Homo sapiens (Human).